A 1409-amino-acid chain; its full sequence is DNA-directed RNA polymerase subunit beta' (1409 aa).

Positions 69, 71, 84, and 87 each coordinate Zn(2+). Residues Asp-461, Asp-463, and Asp-465 each contribute to the Mg(2+) site. The Zn(2+) site is built by Cys-805, Cys-879, Cys-886, and Cys-889.

It belongs to the RNA polymerase beta' chain family. As to quaternary structure, the RNAP catalytic core consists of 2 alpha, 1 beta, 1 beta' and 1 omega subunit. When a sigma factor is associated with the core the holoenzyme is formed, which can initiate transcription. It depends on Mg(2+) as a cofactor. Zn(2+) serves as cofactor.

The enzyme catalyses RNA(n) + a ribonucleoside 5'-triphosphate = RNA(n+1) + diphosphate. Its function is as follows. DNA-dependent RNA polymerase catalyzes the transcription of DNA into RNA using the four ribonucleoside triphosphates as substrates. This is DNA-directed RNA polymerase subunit beta' from Anaplasma phagocytophilum (strain HZ).